A 217-amino-acid polypeptide reads, in one-letter code: Superoxide dismutase [Mn], mitochondrial (217 aa).

A mitochondrion-targeting transit peptide spans methionine 1–glycine 17. Mn(2+)-binding residues include histidine 43, histidine 91, aspartate 175, and histidine 179.

The protein belongs to the iron/manganese superoxide dismutase family. In terms of assembly, homotetramer. Mn(2+) is required as a cofactor.

The protein resides in the mitochondrion matrix. The catalysed reaction is 2 superoxide + 2 H(+) = H2O2 + O2. Its function is as follows. Destroys superoxide anion radicals which are normally produced within the cells and which are toxic to biological systems. The protein is Superoxide dismutase [Mn], mitochondrial (Sod2) of Drosophila melanogaster (Fruit fly).